We begin with the raw amino-acid sequence, 249 residues long: Uridylate kinase (249 aa).

23–26 (KISG) is a binding site for ATP. The interval 31-36 (GDQGFG) is involved in allosteric activation by GTP. Position 65 (Gly65) interacts with UMP. Residues Gly66 and Arg70 each contribute to the ATP site. UMP is bound by residues Asp85 and 146–153 (TGNPYFTT). ATP contacts are provided by Thr173, Tyr179, and Asp182.

It belongs to the UMP kinase family. Homohexamer.

The protein localises to the cytoplasm. It carries out the reaction UMP + ATP = UDP + ADP. The protein operates within pyrimidine metabolism; CTP biosynthesis via de novo pathway; UDP from UMP (UMPK route): step 1/1. Allosterically activated by GTP. Inhibited by UTP. Catalyzes the reversible phosphorylation of UMP to UDP. The chain is Uridylate kinase from Jannaschia sp. (strain CCS1).